The primary structure comprises 377 residues: Chorismate synthase (377 aa).

2 residues coordinate NADP(+): arginine 48 and arginine 54. FMN-binding positions include 125-127 (RSS), 238-239 (NA), glycine 278, 293-297 (KPTSS), and arginine 319.

This sequence belongs to the chorismate synthase family. Homotetramer. Requires FMNH2 as cofactor.

It catalyses the reaction 5-O-(1-carboxyvinyl)-3-phosphoshikimate = chorismate + phosphate. Its pathway is metabolic intermediate biosynthesis; chorismate biosynthesis; chorismate from D-erythrose 4-phosphate and phosphoenolpyruvate: step 7/7. Catalyzes the anti-1,4-elimination of the C-3 phosphate and the C-6 proR hydrogen from 5-enolpyruvylshikimate-3-phosphate (EPSP) to yield chorismate, which is the branch point compound that serves as the starting substrate for the three terminal pathways of aromatic amino acid biosynthesis. This reaction introduces a second double bond into the aromatic ring system. The polypeptide is Chorismate synthase (Aromatoleum aromaticum (strain DSM 19018 / LMG 30748 / EbN1) (Azoarcus sp. (strain EbN1))).